Here is a 165-residue protein sequence, read N- to C-terminus: Probable chemoreceptor glutamine deamidase CheD (165 aa).

This sequence belongs to the CheD family.

It carries out the reaction L-glutaminyl-[protein] + H2O = L-glutamyl-[protein] + NH4(+). In terms of biological role, probably deamidates glutamine residues to glutamate on methyl-accepting chemotaxis receptors (MCPs), playing an important role in chemotaxis. This is Probable chemoreceptor glutamine deamidase CheD from Symbiobacterium thermophilum (strain DSM 24528 / JCM 14929 / IAM 14863 / T).